The sequence spans 554 residues: Propanediol dehydratase large subunit (554 aa).

It belongs to the diol/glycerol dehydratase large subunit family. The propanediol dehydratase enzyme is a heterotrimeric complex composed of a large (PduC), a medium (PduD) and a small (PduE) subunit. It depends on adenosylcob(III)alamin as a cofactor.

It localises to the bacterial microcompartment. The enzyme catalyses propane-1,2-diol = propanal + H2O. It functions in the pathway polyol metabolism; 1,2-propanediol degradation. Its activity is regulated as follows. Inhibited by glycerol. Functionally, part of the PduCDE complex that catalyzes the dehydration of 1,2-propanediol (1,2-PD) to propionaldehyde. Required for S.typhimurium growth on 1,2-PD as the sole carbon and energy source. This subunit is directly targeted to the BMC. Its function is as follows. The 1,2-PD-specific bacterial microcompartment (BMC) concentrates low levels of 1,2-PD catabolic enzymes, concentrates volatile reaction intermediates thus enhancing pathway flux and keeps the level of toxic, mutagenic propionaldehyde low. The polypeptide is Propanediol dehydratase large subunit (Salmonella typhimurium (strain LT2 / SGSC1412 / ATCC 700720)).